Consider the following 181-residue polypeptide: Ubiquitin-conjugating enzyme E2 19 (181 aa).

The span at 1-10 (MATVNGYTGN) shows a compositional bias: polar residues. Residues 1-33 (MATVNGYTGNTPAATTPAATGSKQSAPPTKTVD) are disordered. Over residues 11–20 (TPAATTPAAT) the composition is skewed to low complexity. One can recognise a UBC core domain in the interval 36 to 181 (SVLKRLQSEL…VEKLYKPLNA (146 aa)). Residue Cys-120 is the Glycyl thioester intermediate of the active site.

The protein belongs to the ubiquitin-conjugating enzyme family. As to quaternary structure, interacts with OR. Binds to LOT1. In terms of tissue distribution, expressed in all tissues with cell division activities and in mature leaves.

Its subcellular location is the cytoplasm. The protein localises to the nucleus. It carries out the reaction S-ubiquitinyl-[E1 ubiquitin-activating enzyme]-L-cysteine + [E2 ubiquitin-conjugating enzyme]-L-cysteine = [E1 ubiquitin-activating enzyme]-L-cysteine + S-ubiquitinyl-[E2 ubiquitin-conjugating enzyme]-L-cysteine.. It functions in the pathway protein modification; protein ubiquitination. Functionally, accepts the ubiquitin from the E1 complex and catalyzes its covalent attachment to other proteins. Part of the anaphase-promoting complex (APC). May have a key function during cell cycle and be involved in cyclin B1 degradation. Triggers OR ubiquitination that mediates its subsequent nuclear localization. Involved in the repression of early light-induced proteins (ELIPs, e.g. ELIP1 and ELIP2) expression, probably via OR nuclear relocalization. The protein is Ubiquitin-conjugating enzyme E2 19 of Arabidopsis thaliana (Mouse-ear cress).